Consider the following 136-residue polypeptide: Single-stranded DNA-binding protein 1 (136 aa).

The SSB domain occupies 4 to 109 (LNKMQLIGNL…IMAKEMQMLG (106 aa)). A disordered region spans residues 109–136 (GKKQDNNKVGNARHGDALPADEDDYYDF). The segment covering 127 to 136 (PADEDDYYDF) has biased composition (acidic residues).

In terms of assembly, homotetramer.

The polypeptide is Single-stranded DNA-binding protein 1 (ssb1) (Xylella fastidiosa (strain 9a5c)).